The following is a 321-amino-acid chain: 2,3,4,5-tetrahydropyridine-2,6-dicarboxylate N-succinyltransferase (321 aa).

The Mg(2+) site is built by Asp166 and Glu183. Glu199 acts as the Acyl-anhydride intermediate in catalysis. Residues Arg201, Gly216, Ser219, Ala242, 257–258 (EA), Gly265, Lys281, and 294–297 (RRNS) each bind succinyl-CoA.

This sequence belongs to the type 2 tetrahydrodipicolinate N-succinyltransferase family. As to quaternary structure, homotrimer.

It is found in the cytoplasm. The enzyme catalyses (S)-2,3,4,5-tetrahydrodipicolinate + succinyl-CoA + H2O = (S)-2-succinylamino-6-oxoheptanedioate + CoA. It participates in amino-acid biosynthesis; L-lysine biosynthesis via DAP pathway; LL-2,6-diaminopimelate from (S)-tetrahydrodipicolinate (succinylase route): step 1/3. Catalyzes the conversion of the cyclic tetrahydrodipicolinate (THDP) into the acyclic N-succinyl-L-2-amino-6-oxopimelate using succinyl-CoA. This is 2,3,4,5-tetrahydropyridine-2,6-dicarboxylate N-succinyltransferase from Micrococcus luteus (strain ATCC 4698 / DSM 20030 / JCM 1464 / CCM 169 / CCUG 5858 / IAM 1056 / NBRC 3333 / NCIMB 9278 / NCTC 2665 / VKM Ac-2230) (Micrococcus lysodeikticus).